A 700-amino-acid chain; its full sequence is Polyribonucleotide nucleotidyltransferase (700 aa).

Mg(2+)-binding residues include Asp-485 and Asp-491. In terms of domain architecture, KH spans 552–611 (PRITVIKINPEKIRDVIGKGGAVIRALTEETGTTIELEDDGTVKIASSNGEATKEAIRRI). The S1 motif domain occupies 621–689 (GRIYNGKVIR…RQGRVRLSIK (69 aa)).

Belongs to the polyribonucleotide nucleotidyltransferase family. Component of the RNA degradosome, which is a multiprotein complex involved in RNA processing and mRNA degradation. Requires Mg(2+) as cofactor.

It is found in the cytoplasm. The enzyme catalyses RNA(n+1) + phosphate = RNA(n) + a ribonucleoside 5'-diphosphate. Its function is as follows. Involved in mRNA degradation. Catalyzes the phosphorolysis of single-stranded polyribonucleotides processively in the 3'- to 5'-direction. This is Polyribonucleotide nucleotidyltransferase from Shewanella baltica (strain OS185).